Consider the following 207-residue polypeptide: 3-demethoxyubiquinol 3-hydroxylase (207 aa).

Fe cation-binding residues include Glu-56, Glu-86, His-89, Glu-138, Glu-170, and His-173.

This sequence belongs to the COQ7 family. Requires Fe cation as cofactor.

Its subcellular location is the cell membrane. It catalyses the reaction a 5-methoxy-2-methyl-3-(all-trans-polyprenyl)benzene-1,4-diol + AH2 + O2 = a 3-demethylubiquinol + A + H2O. Its pathway is cofactor biosynthesis; ubiquinone biosynthesis. Catalyzes the hydroxylation of 2-nonaprenyl-3-methyl-6-methoxy-1,4-benzoquinol during ubiquinone biosynthesis. This chain is 3-demethoxyubiquinol 3-hydroxylase, found in Cupriavidus necator (strain ATCC 17699 / DSM 428 / KCTC 22496 / NCIMB 10442 / H16 / Stanier 337) (Ralstonia eutropha).